The following is a 330-amino-acid chain: Olfactory receptor 5P70 (330 aa).

At 1–28 (MAFLEDGNHTIVTEFILLGLTDDPVLRD) the chain is on the extracellular side. Asparagine 8 is a glycosylation site (N-linked (GlcNAc...) asparagine). Residues 29 to 49 (ILFTIILCIYLVTVSGNLSTI) traverse the membrane as a helical segment. The Cytoplasmic portion of the chain corresponds to 50–57 (LLIRVSSQ). A helical transmembrane segment spans residues 58–78 (LHHPMYFFLSHLASVDIGISS). Topologically, residues 79–102 (SVTPNMLANFLVKPNTISYIGCSI) are extracellular. A disulfide bridge links cysteine 100 with cysteine 192. A helical transmembrane segment spans residues 103 to 123 (QFTSAVFLATVECFLLAAMAY). The Cytoplasmic segment spans residues 124–136 (DRFVAICNPLLYS). The chain crosses the membrane as a helical span at residues 137 to 157 (TKMSREACIQLVVGSYIQGLL). At 158–199 (NASFFTLSFFSLIFCGPNRINHFYCDLAPLVELSCSDVTLAV) the chain is on the extracellular side. The chain crosses the membrane as a helical span at residues 200–220 (VITSISAGFITLTTVFVIAIS). Topologically, residues 221–240 (YSCIFITIMKMHSTESRYKA) are cytoplasmic. Residues 241-261 (FSTCTSHLTAVTLFYGTTMFI) traverse the membrane as a helical segment. At 262 to 274 (YVMPKSSYSTDQN) the chain is on the extracellular side. Residues 275 to 295 (KVLSVFYMVVIPMLNPLIYSL) form a helical membrane-spanning segment. The Cytoplasmic portion of the chain corresponds to 296-330 (RNNEIKGALKRYLGKKIFSYGNLFCKTHYNDTHQV).

Belongs to the G-protein coupled receptor 1 family.

The protein localises to the cell membrane. Potential odorant receptor. The protein is Olfactory receptor 5P70 of Mus musculus (Mouse).